The following is a 49-amino-acid chain: Large ribosomal subunit protein bL33 (49 aa).

It belongs to the bacterial ribosomal protein bL33 family.

This chain is Large ribosomal subunit protein bL33, found in Desulforudis audaxviator (strain MP104C).